Reading from the N-terminus, the 141-residue chain is Hemoglobin subunit alpha (141 aa).

The Globin domain maps to 1 to 141 (VLSPADKSNV…VSTVLTSKYR (141 aa)). Phosphoserine is present on serine 3. N6-succinyllysine is present on residues lysine 7 and lysine 11. At lysine 16 the chain carries N6-acetyllysine; alternate. The residue at position 16 (lysine 16) is an N6-succinyllysine; alternate. At tyrosine 24 the chain carries Phosphotyrosine. Serine 35 carries the phosphoserine modification. Lysine 40 bears the N6-succinyllysine mark. Serine 49 is modified (phosphoserine). O2 is bound at residue histidine 58. Histidine 87 lines the heme b pocket. Serine 102 carries the phosphoserine modification. Residue threonine 108 is modified to Phosphothreonine. Residues serine 124 and serine 131 each carry the phosphoserine modification. A phosphothreonine mark is found at threonine 134 and threonine 137. Serine 138 is subject to Phosphoserine.

It belongs to the globin family. As to quaternary structure, heterotetramer of two alpha chains and two beta chains. As to expression, red blood cells.

In terms of biological role, involved in oxygen transport from the lung to the various peripheral tissues. Functionally, hemopressin acts as an antagonist peptide of the cannabinoid receptor CNR1. Hemopressin-binding efficiently blocks cannabinoid receptor CNR1 and subsequent signaling. This is Hemoglobin subunit alpha (HBA) from Mico argentatus (Silvery marmoset).